The primary structure comprises 320 residues: ATP-dependent 6-phosphofructokinase (320 aa).

Gly-12 contacts ATP. ADP is bound by residues 22–26 (RGVVR) and 55–60 (RYSVSD). Residues 73 to 74 (RF) and 103 to 106 (GDGS) contribute to the ATP site. Position 104 (Asp-104) interacts with Mg(2+). 126 to 128 (TID) is a binding site for substrate. Asp-128 functions as the Proton acceptor in the catalytic mechanism. Residue Arg-155 coordinates ADP. Residues Arg-163 and 170-172 (MGR) each bind substrate. ADP contacts are provided by residues 186–188 (GCE), Lys-212, and 214–216 (KKH). Substrate contacts are provided by residues Glu-223, Arg-244, and 250 to 253 (HIQR).

It belongs to the phosphofructokinase type A (PFKA) family. ATP-dependent PFK group I subfamily. Prokaryotic clade 'B1' sub-subfamily. Homotetramer. Requires Mg(2+) as cofactor.

It is found in the cytoplasm. It catalyses the reaction beta-D-fructose 6-phosphate + ATP = beta-D-fructose 1,6-bisphosphate + ADP + H(+). It participates in carbohydrate degradation; glycolysis; D-glyceraldehyde 3-phosphate and glycerone phosphate from D-glucose: step 3/4. Its activity is regulated as follows. Allosterically activated by ADP and other diphosphonucleosides, and allosterically inhibited by phosphoenolpyruvate. Functionally, catalyzes the phosphorylation of D-fructose 6-phosphate to fructose 1,6-bisphosphate by ATP, the first committing step of glycolysis. In Serratia proteamaculans (strain 568), this protein is ATP-dependent 6-phosphofructokinase.